Reading from the N-terminus, the 1755-residue chain is MESQQLSQHSHISHGSACASVTSKEVHTNQDPLDVSASKTEECEKASTKANSQQTTTPASSAVPENPHHASPQTAQSHSPQNGPYPQQCMMTQNQANPSGWSFYGHPSMIPYTPYQMSPMYFPPGPQSQFPQYPSSVGTPLSTPSPESGNTFTDSSSADSDMTSTKKYVRPPPMLTSPNDFPNWVKTYIKFLQNSNLGGIIPTVNGKPVRQITDDELTFLYNTFQIFAPSQFLPTWVKDILSVDYTDIMKILSKSIEKMQSDTQEANDIVTLANLQYNGSTPADAFETKVTNIIDRLNNNGIHINNKVACQLIMRGLSGEYKFLRYTRHRHLNMTVAELFLDIHAIYEEQQGSRNSKPNYRRNPSDEKNDSRSYTNTTKPKVIARNPQKTNNSKSKTARAHNVSTSNNSPSTDNDSISKSTTEPIQLNNKHDLHLGQKLTESTVNHTNHSDDELPGHLLLDSGASRTLIRSAHHIHSASSNPDINVVDAQKRNIPINAIGDLQFHFQDNTKTSIKVLHTPNIAYDLLSLNELAAVDITACFTKNVLERSDGTVLAPIVKYGDFYWVSKKYLLPSNISVPTINNVHTSESTRKYPYPFIHRMLAHANAQTIRYSLKNNTITYFNESDVDWSSAIDYQCPDCLIGKSTKHRHIKGSRLKYQNSYEPFQYLHTDIFGPVHNLPKSAPSYFISFTDETTKFRWVYPLHDRREDSILDVFTTILAFIKNQFQASVLVIQMDRGSEYTNRTLHKFLEKNGITPCYTTTADSRAHGVAERLNRTLLDDCRTQLQCSGLPNHLWFSAIEFSTIVRNSLASPKSKKSARQHAGLAGLDISTLLPFGQPVIVNDHNPNSKIHPRGIPGYALHPSRNSYGYIIYLPSLKKTVDTTNYVILQGKESRLDQFNYDALTFDEDLNRLTASYQSFIASNEIQQSDDLNIESDHDFQSDIELHPEQPRNVLSKAVSPTDSTPPSTHTEDSKRVSKTNIRAPREVDPNISESNILPSKKRSSTPQISNIESTGSGGMHKLNVPLLAPMSQSNTHESSHASKSKDFRHSDSYSENETNHTNVPISSTGGTNNKTVPQISDQETEKRIIHRSPSIDASPPENNSSHNIVPIKTPTTVSEQNTEESIIADLPLPDLPPESPTEFPDPFKELPPINSRQTNSSLGGIGDSNAYTTINSKKRSLEDNETEIKVSRDTWNTKNMRSLEPPRSKKRIHLIAAVKAVKSIKPIRTTLRYDEAITYNKDIKEKEKYIEAYHKEVNQLLKMKTWDTDEYYDRKEIDPKRVINSMFIFNKKRDGTHKARFVARGDIQHPDTYDSGMQSNTVHHYALMTSLSLALDNNYYITQLDISSAYLYADIKEELYIRPPPHLGMNDKLIRLKKSLYGLKQSGANWYETIKSYLIQQCGMEEVRGWSCVFKNSQVTICLFVDDMVLFSKNLNSNKRIIEKLKMQYDTKIINLGESDEEIQYDILGLEIKYQRGKYMKLGMENSLTEKIPKLNVPLNPKGRKLSAPGQPGLYIDQQELELEEDDYKMKVHEMQKLIGLASYVGYKFRFDLLYYINTLAQHILFPSKQVLDMTYELIQFIWNTRDKQLIWHKSKPVKPTNKLVVISDASYGNQPYYKSQIGNIYLLNGKVIGGKSTKASLTCTSTTEAEIHAISESVPLLNNLSYLIQELDKKPITKGLLTDSKSTISIIISNNEEKFRNRFFGTKAMRLRDEVSGNHLHVCYIETKKNIADVMTKPLPIKTFKLLTNKWIH.

Residues 1-16 (MESQQLSQHSHISHGS) are compositionally biased toward low complexity. 3 disordered regions span residues 1-93 (MESQ…MMTQ), 126-173 (PQSQ…RPPP), and 352-421 (GSRN…SKST). 3 stretches are compositionally biased toward polar residues: residues 48–60 (TKAN…TPAS), 71–93 (SPQT…MMTQ), and 127–152 (QSQF…GNTF). A compositionally biased stretch (low complexity) spans 153–165 (TDSSSADSDMTST). Positions 299–401 (NNGIHINNKV…NSKSKTARAH (103 aa)) are RNA-binding. Residues 402 to 418 (NVSTSNNSPSTDNDSIS) are compositionally biased toward low complexity. Position 416 is a phosphoserine (Ser416). Asp461 functions as the For protease activity; shared with dimeric partner in the catalytic mechanism. Positions 583–640 (NVHTSESTRKYPYPFIHRMLAHANAQTIRYSLKNNTITYFNESDVDWSSAIDYQCPDC) are integrase-type zinc finger-like. The Integrase catalytic domain maps to 660–835 (NSYEPFQYLH…AGLDISTLLP (176 aa)). Mg(2+)-binding residues include Asp671 and Asp736. 3 disordered regions span residues 956–1087 (SKAV…ETEK), 1092–1111 (RSPS…NIVP), and 1130–1186 (DLPL…EDNE). The span at 960–969 (SPTDSTPPST) shows a compositional bias: low complexity. Positions 1005–1015 (STPQISNIEST) are enriched in polar residues. Positions 1038–1053 (ESSHASKSKDFRHSDS) are enriched in basic and acidic residues. Polar residues-rich tracts occupy residues 1054-1082 (YSEN…QISD) and 1101-1111 (PENNSSHNIVP). Positions 1178–1212 (KKRSLEDNETEIKVSRDTWNTKNMRSLEPPRSKKR) match the Bipartite nuclear localization signal motif. One can recognise a Reverse transcriptase Ty1/copia-type domain in the interval 1338-1476 (NNYYITQLDI…DILGLEIKYQ (139 aa)). Positions 1346, 1427, 1428, 1610, 1652, and 1685 each coordinate Mg(2+). The RNase H Ty1/copia-type domain occupies 1610–1752 (DASYGNQPYY…IKTFKLLTNK (143 aa)).

In terms of assembly, the capsid protein forms a homotrimer, from which the VLPs are assembled. The protease is a homodimer, whose active site consists of two apposed aspartic acid residues. In terms of processing, initially, virus-like particles (VLPs) are composed of the structural unprocessed proteins Gag and Gag-Pol, and also contain the host initiator methionine tRNA (tRNA(i)-Met) which serves as a primer for minus-strand DNA synthesis, and a dimer of genomic Ty RNA. Processing of the polyproteins occurs within the particle and proceeds by an ordered pathway, called maturation. First, the protease (PR) is released by autocatalytic cleavage of the Gag-Pol polyprotein yielding capsid protein p45 and a Pol-p154 precursor protein. This cleavage is a prerequisite for subsequent processing of Pol-p154 at the remaining sites to release the mature structural and catalytic proteins. Maturation takes place prior to the RT reaction and is required to produce transposition-competent VLPs.

The protein resides in the cytoplasm. It localises to the nucleus. It carries out the reaction DNA(n) + a 2'-deoxyribonucleoside 5'-triphosphate = DNA(n+1) + diphosphate. The enzyme catalyses Endonucleolytic cleavage to 5'-phosphomonoester.. Its function is as follows. Capsid protein (CA) is the structural component of the virus-like particle (VLP), forming the shell that encapsulates the retrotransposons dimeric RNA genome. The particles are assembled from trimer-clustered units and there are holes in the capsid shells that allow for the diffusion of macromolecules. CA also has nucleocapsid-like chaperone activity, promoting primer tRNA(i)-Met annealing to the multipartite primer-binding site (PBS), dimerization of Ty1 RNA and initiation of reverse transcription. In terms of biological role, the aspartyl protease (PR) mediates the proteolytic cleavages of the Gag and Gag-Pol polyproteins after assembly of the VLP. Reverse transcriptase/ribonuclease H (RT) is a multifunctional enzyme that catalyzes the conversion of the retro-elements RNA genome into dsDNA within the VLP. The enzyme displays a DNA polymerase activity that can copy either DNA or RNA templates, and a ribonuclease H (RNase H) activity that cleaves the RNA strand of RNA-DNA heteroduplexes during plus-strand synthesis and hydrolyzes RNA primers. The conversion leads to a linear dsDNA copy of the retrotransposon that includes long terminal repeats (LTRs) at both ends. Functionally, integrase (IN) targets the VLP to the nucleus, where a subparticle preintegration complex (PIC) containing at least integrase and the newly synthesized dsDNA copy of the retrotransposon must transit the nuclear membrane. Once in the nucleus, integrase performs the integration of the dsDNA into the host genome. The sequence is that of Transposon Ty1-JR2 Gag-Pol polyprotein (TY1B-JR2) from Saccharomyces cerevisiae (strain ATCC 204508 / S288c) (Baker's yeast).